A 332-amino-acid polypeptide reads, in one-letter code: Hdr-like menaquinol oxidoreductase cytochrome b-like subunit (332 aa).

Transmembrane regions (helical) follow at residues 3–23, 97–117, 143–163, 177–197, and 230–250; these read GVIFGVIVPYIAVAIFVIGVI, DARWLWLFGILFHYSLLLVLI, VFIPSVYMSGLAIVAALFLLW, LPSDHFALILLLAITISGNVM, and IEPIFYVHFALASFLLAYFPF.

As to quaternary structure, consists of five subunits: an integral membrane subunit, a cytochrome b-like subunit, a cytochrome c subunit and two iron-sulfur subunits.

The protein resides in the cell membrane. Has menaquinol-oxidizing activity. HmeC and HmeD subunits may together mediate electron transfer from menaquinol to an unidentified electron acceptor on the cytoplasmic side of the membrane. The protein is Hdr-like menaquinol oxidoreductase cytochrome b-like subunit (hmeC) of Archaeoglobus fulgidus (strain ATCC 49558 / DSM 4304 / JCM 9628 / NBRC 100126 / VC-16).